Reading from the N-terminus, the 531-residue chain is Sop-2-related protein 3 (531 aa).

Expressed ubiquitously.

The protein localises to the cytoplasm. Its subcellular location is the nucleus. Probably acts synergistically with sop-2 to maintain the transcriptionally repressive state of homeotic genes in order to regulate various neurogenic identities. Specification of some neuronal identities also involves expression of non-Hox genes. Specifies dopaminergic and serotonergic neuronal cell fate, and regulates neurotransmitter choice and axon pathfinding. This chain is Sop-2-related protein 3 (sor-3), found in Caenorhabditis elegans.